The chain runs to 243 residues: Type III pantothenate kinase (243 aa).

7–14 (DLGNSRFK) lines the ATP pocket. Substrate contacts are provided by residues Y91 and 98 to 101 (GVDR). Residue D100 is the Proton acceptor of the active site. T122 contributes to the ATP binding site. Residue T172 coordinates substrate.

It belongs to the type III pantothenate kinase family. As to quaternary structure, homodimer. Requires NH4(+) as cofactor. The cofactor is K(+).

The protein resides in the cytoplasm. The catalysed reaction is (R)-pantothenate + ATP = (R)-4'-phosphopantothenate + ADP + H(+). The protein operates within cofactor biosynthesis; coenzyme A biosynthesis; CoA from (R)-pantothenate: step 1/5. Functionally, catalyzes the phosphorylation of pantothenate (Pan), the first step in CoA biosynthesis. The chain is Type III pantothenate kinase from Stenotrophomonas maltophilia (strain R551-3).